A 321-amino-acid polypeptide reads, in one-letter code: Olfactory receptor 5P60 (321 aa).

At 1-28 (MAFLHNGNHTAVTEFILLGLTDDPVLRI) the chain is on the extracellular side. An N-linked (GlcNAc...) asparagine glycan is attached at Asn8. Residues 29–49 (VLFTIILCIYLVTVSGNLSTI) form a helical membrane-spanning segment. Over 50–57 (LLIRVSSQ) the chain is Cytoplasmic. The helical transmembrane segment at 58 to 78 (LHHPMYFFLSHLASADIGYSS) threads the bilayer. Residues 79-102 (SVTPNMLVNFLVKQNTISYIGCSI) lie on the Extracellular side of the membrane. Cysteines 100 and 192 form a disulfide. The chain crosses the membrane as a helical span at residues 103–123 (QFGSAAFFGGLECFLLAVMAY). Topologically, residues 124–136 (DRFVAICNPLLYS) are cytoplasmic. The helical transmembrane segment at 137 to 157 (TKMSTQVCVQLVVGSYIGGFL) threads the bilayer. Residues 158-199 (NASFATVSFLFLFFCGPNIINHFFCDFAPLIELSCSDVRISV) lie on the Extracellular side of the membrane. A helical transmembrane segment spans residues 200–220 (LVTSFSAGTVTMLTVLVIAIS). The Cytoplasmic segment spans residues 221 to 240 (YTYILITILKMRSTEGRHKA). A helical transmembrane segment spans residues 241–261 (FSTCTSHLTAVSLFYGTITFI). The Extracellular segment spans residues 262 to 274 (YVMPKSRYSTDQN). A helical membrane pass occupies residues 275–295 (KVVSVFYMVVIPMLNPLIYSL). The Cytoplasmic segment spans residues 296–321 (RNNEIKGALRRHLGKKIFSQSNILFY).

This sequence belongs to the G-protein coupled receptor 1 family.

It localises to the cell membrane. Functionally, potential odorant receptor. The protein is Olfactory receptor 5P60 of Mus musculus (Mouse).